A 274-amino-acid polypeptide reads, in one-letter code: Oxidized low-density lipoprotein receptor 1 (274 aa).

Residues 1–28 (MTLDDLKSNSMKDQPDEKSNGDKAEGPR) are disordered. The Cytoplasmic portion of the chain corresponds to 1 to 37 (MTLDDLKSNSMKDQPDEKSNGDKAEGPRSLSTLRWRP). The span at 13–26 (DQPDEKSNGDKAEG) shows a compositional bias: basic and acidic residues. Residues 38 to 60 (AALILGLLCLGLLVTVILLIIQL) form a helical; Signal-anchor for type II membrane protein membrane-spanning segment. Residue Cys-46 is the site of S-palmitoyl cysteine attachment. Residues 61 to 150 (SQVSDLLKQQ…SGPCPQDWLW (90 aa)) are neck. Over 61–274 (SQVSDLLKQQ…QKRANLLRAQ (214 aa)) the chain is Extracellular. Positions 89–142 (RQAEKSSQESQRELTEMIETLAHKLDEKSKKLMELQQQNLNLQKALEKAANFSG) form a coiled coil. N-linked (GlcNAc...) asparagine glycosylation occurs at Asn-139. 3 disulfide bridges follow: Cys-144–Cys-155, Cys-172–Cys-264, and Cys-243–Cys-256. Positions 151–265 (HEENCYKFSS…CILNAFSICQ (115 aa)) constitute a C-type lectin domain.

As to quaternary structure, homodimer; disulfide-linked. May form a hexamer composed of 3 homodimers. Interacts with HSP70. N-glycosylated.

It is found in the cell membrane. It localises to the membrane raft. The protein localises to the secreted. Receptor that mediates the recognition, internalization and degradation of oxidatively modified low density lipoprotein (oxLDL) by vascular endothelial cells. OxLDL is a marker of atherosclerosis that induces vascular endothelial cell activation and dysfunction, resulting in pro-inflammatory responses, pro-oxidative conditions and apoptosis. Its association with oxLDL induces the activation of NF-kappa-B through an increased production of intracellular reactive oxygen and a variety of pro-atherogenic cellular responses including a reduction of nitric oxide (NO) release, monocyte adhesion and apoptosis. In addition to binding oxLDL, it acts as a receptor for the HSP70 protein involved in antigen cross-presentation to naive T-cells in dendritic cells, thereby participating in cell-mediated antigen cross-presentation. Also involved in inflammatory process, by acting as a leukocyte-adhesion molecule at the vascular interface in endotoxin-induced inflammation. Also acts as a receptor for advanced glycation end (AGE) products, activated platelets, monocytes, apoptotic cells and both Gram-negative and Gram-positive bacteria. The protein is Oxidized low-density lipoprotein receptor 1 (OLR1) of Sus scrofa (Pig).